The following is a 367-amino-acid chain: DNA replication and repair protein RecF (367 aa).

30 to 37 (GANGSGKT) is an ATP binding site.

The protein belongs to the RecF family.

The protein resides in the cytoplasm. In terms of biological role, the RecF protein is involved in DNA metabolism; it is required for DNA replication and normal SOS inducibility. RecF binds preferentially to single-stranded, linear DNA. It also seems to bind ATP. This Pseudomonas savastanoi pv. phaseolicola (strain 1448A / Race 6) (Pseudomonas syringae pv. phaseolicola (strain 1448A / Race 6)) protein is DNA replication and repair protein RecF.